Consider the following 215-residue polypeptide: Ribosomal RNA small subunit methyltransferase G (215 aa).

S-adenosyl-L-methionine-binding positions include Gly-78, Leu-83, 128-129, and Arg-146; that span reads AE.

It belongs to the methyltransferase superfamily. RNA methyltransferase RsmG family.

It localises to the cytoplasm. The catalysed reaction is guanosine(527) in 16S rRNA + S-adenosyl-L-methionine = N(7)-methylguanosine(527) in 16S rRNA + S-adenosyl-L-homocysteine. Its function is as follows. Specifically methylates the N7 position of guanine in position 527 of 16S rRNA. The sequence is that of Ribosomal RNA small subunit methyltransferase G from Anaeromyxobacter dehalogenans (strain 2CP-1 / ATCC BAA-258).